The primary structure comprises 345 residues: N-glycosylase/DNA lyase (345 aa).

Residues asparagine 149, arginine 154, and arginine 204 each coordinate DNA. Catalysis depends on lysine 249, which acts as the Schiff-base intermediate with DNA. 8-oxoguanine-binding residues include proline 266 and aspartate 268. DNA contacts are provided by histidine 270 and glutamine 287. Positions 315 and 319 each coordinate 8-oxoguanine. The segment covering 324-334 (RQSRHAQEPPA) has biased composition (basic and acidic residues). The interval 324-345 (RQSRHAQEPPAKRRKGSKGPEG) is disordered. A compositionally biased stretch (basic residues) spans 335–345 (KRRKGSKGPEG).

Belongs to the type-1 OGG1 family. As to expression, ubiquitous.

It localises to the nucleus. It is found in the nucleoplasm. The protein localises to the nucleus speckle. The protein resides in the nucleus matrix. Its subcellular location is the mitochondrion. The catalysed reaction is 2'-deoxyribonucleotide-(2'-deoxyribose 5'-phosphate)-2'-deoxyribonucleotide-DNA = a 3'-end 2'-deoxyribonucleotide-(2,3-dehydro-2,3-deoxyribose 5'-phosphate)-DNA + a 5'-end 5'-phospho-2'-deoxyribonucleoside-DNA + H(+). Functionally, DNA repair enzyme that incises DNA at 8-oxoG residues. Excises 7,8-dihydro-8-oxoguanine and 2,6-diamino-4-hydroxy-5-N-methylformamidopyrimidine (FAPY) from damaged DNA. Has a beta-lyase activity that nicks DNA 3' to the lesion. This Homo sapiens (Human) protein is N-glycosylase/DNA lyase (OGG1).